The primary structure comprises 618 residues: Serine/threonine-protein kinase TNNI3K (618 aa).

Residue Gly2 is the site of N-myristoyl glycine attachment. The stretch at 21-51 forms a coiled coil; the sequence is SESYVITIERLEDDLKIKEKELTELRNIFGS. ANK repeat units follow at residues 66–96, 100–129, 133–162, 166–195, 199–228, 234–263, 269–298, 304–335, 339–368, and 381–410; these read NGLS…RPSR, NGFT…DIQQ, GGLT…NVNI, VFFT…DVNV, VGDR…KADV, EDHV…EVQP, YGDT…TESL, FSET…NINH, DGHT…DMNL, and DEQT…PQDE. One can recognise a Protein kinase domain in the interval 463-618; that stretch reads IEFHEIIGSG…TAHTIYLLAP (156 aa). ATP contacts are provided by residues 469–477 and Lys490; that span reads IGSGSFGKV. The active-site Proton acceptor is the Asp588.

This sequence belongs to the protein kinase superfamily. TKL Ser/Thr protein kinase family. MAP kinase kinase kinase subfamily. Interacts with TNNI3, ACTC, ACTA1, MYBPC3, AIP, FABP3 and HADHB. Mg(2+) serves as cofactor. In terms of processing, autophosphorylated.

The protein resides in the nucleus. Its subcellular location is the cytoplasm. The catalysed reaction is L-seryl-[protein] + ATP = O-phospho-L-seryl-[protein] + ADP + H(+). It carries out the reaction L-threonyl-[protein] + ATP = O-phospho-L-threonyl-[protein] + ADP + H(+). In terms of biological role, may play a role in cardiac physiology. This is Serine/threonine-protein kinase TNNI3K from Pongo abelii (Sumatran orangutan).